We begin with the raw amino-acid sequence, 884 residues long: Valine--tRNA ligase (884 aa).

The short motif at 46 to 56 (PNVTGKLHLGH) is the 'HIGH' region element. The 'KMSKS' region motif lies at 520–524 (KMSKS). K523 contributes to the ATP binding site. The stretch at 809 to 844 (LADLLNVEEELARLEKELAKWQKELNMVGKKLSNER) forms a coiled coil.

Belongs to the class-I aminoacyl-tRNA synthetase family. ValS type 1 subfamily. In terms of assembly, monomer.

The protein resides in the cytoplasm. It catalyses the reaction tRNA(Val) + L-valine + ATP = L-valyl-tRNA(Val) + AMP + diphosphate. Catalyzes the attachment of valine to tRNA(Val). As ValRS can inadvertently accommodate and process structurally similar amino acids such as threonine, to avoid such errors, it has a 'posttransfer' editing activity that hydrolyzes mischarged Thr-tRNA(Val) in a tRNA-dependent manner. The sequence is that of Valine--tRNA ligase from Streptococcus agalactiae serotype Ia (strain ATCC 27591 / A909 / CDC SS700).